Here is a 505-residue protein sequence, read N- to C-terminus: Lysine--tRNA ligase (505 aa).

Positions 415 and 422 each coordinate Mg(2+).

The protein belongs to the class-II aminoacyl-tRNA synthetase family. As to quaternary structure, homodimer. Requires Mg(2+) as cofactor.

It is found in the cytoplasm. The catalysed reaction is tRNA(Lys) + L-lysine + ATP = L-lysyl-tRNA(Lys) + AMP + diphosphate. This is Lysine--tRNA ligase from Yersinia enterocolitica serotype O:8 / biotype 1B (strain NCTC 13174 / 8081).